Here is a 147-residue protein sequence, read N- to C-terminus: DNA-directed RNA polymerase I subunit rpa14 (147 aa).

The segment at 71–147 (VQGPPTEELI…TQGVGEKEQS (77 aa)) is disordered. The segment covering 74 to 84 (PPTEELIIPPE) has biased composition (low complexity). The segment covering 87–111 (LETKEEESLKHAREENDDLHLDKET) has biased composition (basic and acidic residues). Basic residues predominate over residues 112 to 124 (KKRLKKEKKKAAR). Positions 125–135 (REKEEARKAKA) are enriched in basic and acidic residues.

As to quaternary structure, component of the RNA polymerase I (Pol I) complex consisting of 14 subunits. Part of a Pol I subcomplex consisting of the subunits A14 and A43. Interacts with rpa43. Post-translationally, phosphorylated.

Its subcellular location is the nucleus. The protein resides in the nucleolus. DNA-dependent RNA polymerase catalyzes the transcription of DNA into RNA using the four ribonucleoside triphosphates as substrates. Component of RNA polymerase I which synthesizes ribosomal RNA precursors. A14 seems to play a role in the stability of Pol I subunit A43 and association of rrn3 to Pol I. This chain is DNA-directed RNA polymerase I subunit rpa14 (ker1), found in Schizosaccharomyces pombe (strain 972 / ATCC 24843) (Fission yeast).